Consider the following 313-residue polypeptide: Vacuolar membrane protein ZYRO0A01628g (313 aa).

Low complexity predominate over residues 22-37 (SASKTSSHTSKTSYSA). The disordered stretch occupies residues 22–48 (SASKTSSHTSKTSYSAVVTPPSSDGNP). The helical transmembrane segment at 59-79 (GLIYIIVGGTAAAIFAFIILW) threads the bilayer. Low complexity predominate over residues 221 to 234 (TSLPSASESSSNLL). A disordered region spans residues 221 to 313 (TSLPSASESS…LLEGNDDGTT (93 aa)). The span at 235–247 (DRPERTASPERKP) shows a compositional bias: basic and acidic residues. A compositionally biased stretch (basic residues) spans 248–257 (KAYGRYHQRN). Residues 285-301 (NVNNNNKKHGTTPSRFL) show a composition bias toward polar residues.

The protein belongs to the PRM5 family.

It is found in the vacuole membrane. The polypeptide is Vacuolar membrane protein ZYRO0A01628g (Zygosaccharomyces rouxii (strain ATCC 2623 / CBS 732 / NBRC 1130 / NCYC 568 / NRRL Y-229)).